A 488-amino-acid polypeptide reads, in one-letter code: Surface lipoprotein assembly modifier 1 (488 aa).

The N-terminal stretch at 1-31 (MVIFYFCGKTFMPARNRWMLLLPLLASAAYA) is a signal peptide. Residues 32–202 (EETPREPDLR…LYRKALRERD (171 aa)) form an N-terminal domain region. TPR repeat units follow at residues 118–151 (MLAL…QPDA) and 171–204 (AADQ…RDAW). A C-terminal probable beta barrel, partially restores export of lipoproteins region spans residues 203-488 (AWKVNGGFSV…RAFVEFNKTF (286 aa)). 14 beta stranded membrane passes run 204 to 214 (WKVNGGFSVTR), 241 to 252 (VNYRLGAEKKWS), 257 to 267 (WYTTAGGDVSG), 280 to 291 (TAGVSGGIGFAD), 294 to 304 (KDAGLAVFHER), 316 to 325 (NGARLYFNRW), 330 to 340 (WQTLSSAEWGR), 354 to 364 (LQISNSLVFYR), 368 to 377 (QYWMGGLDFY), 393 to 402 (GLRFAWGQEW), 407 to 417 (LSSLLRLGAAK), 439 to 448 (LNTSLSLWHR), 455 to 464 (ITPRLTLSHR), and 478 to 488 (NRAFVEFNKTF).

This sequence belongs to the Slam family. In terms of assembly, interacts with the C-terminal domain of surface lipoprotein TbpB.

The protein resides in the cell outer membrane. In terms of biological role, required for correct export to the cell surface of some cell outer membrane lipoproteins both in Neisseria and heterologously in E.coli. This chain is Surface lipoprotein assembly modifier 1, found in Neisseria meningitidis serogroup B (strain ATCC BAA-335 / MC58).